Consider the following 127-residue polypeptide: UPF0212 protein VNG_1264C (127 aa).

It belongs to the UPF0212 family.

In Halobacterium salinarum (strain ATCC 700922 / JCM 11081 / NRC-1) (Halobacterium halobium), this protein is UPF0212 protein VNG_1264C.